Consider the following 822-residue polypeptide: Lysine-specific histone demethylase 2 (822 aa).

The segment covering 1–11 (MATPRGRTKKK) has biased composition (basic residues). Residues 1 to 47 (MATPRGRTKKKASFDHSPDSLPLRSSGRQAKKKATETTDEDEDGGSE) form a disordered region. Phosphoserine occurs at positions 13, 17, and 26. The Zn(2+) site is built by C53, C58, C65, C73, H84, H90, C92, C95, C142, C147, C169, and C185. The CW-type zinc-finger motif lies at 133–193 (DQQLPYWVQC…HCSLPEDLRV (61 aa)). S247 carries the post-translational modification Phosphoserine. Residues 273-292 (YQPNECGKALCVRPDVMELD) are GLYR1-binding. Positions 275–373 (PNECGKALCV…TGVLSVGADQ (99 aa)) constitute an SWIRM domain. Residue 383-439 (KSVIIIGAGPAGLAAARQLHNFGIKVTVLEAKDRIGGRVWDDKSFKGVTVGRGAQIV) participates in FAD binding. Histone H3-binding stretches follow at residues 438–467 (IVNGCINNPVALMCEQLGISMHKFGERCDL), 487–498 (FNALLDVVSEWR), and 538–572 (FHLSNLEYACGSNLHQVSARSWDHNEFFAQFAGDH). Residues 564–566 (FFA) form a GLYR1-binding region. FAD-binding positions include V598, E795, and 803 to 805 (QTV). The GLYR1-binding stretch occupies residues 798-814 (NRHFPQTVTGAYLSGVR).

It belongs to the flavin monoamine oxidase family. Interacts with its cofactor GLYR1 at nucleosomes; this interaction stimulates H3K4me1 and H3K4me2 demethylation. In contrast to KDM1A, does not form a complex with RCOR1/CoREST. Possible accessory component of the polycomb repressive deubiquitinase (PR-DUB) complex, at least composed of BAP1, one of ASXL1, ASXL2 or (probably) ASXL3 and one of MBD5 or MBD6. The PR-DUB core associates with a number of accessory proteins, including FOXK1, FOXK2, KDM1B, HCFC1 and OGT; KDM1B specifically associates with ASXL2 PR-DUB complexes. FAD serves as cofactor. The cofactor is Zn(2+).

It is found in the nucleus. The protein localises to the chromosome. The enzyme catalyses N(6),N(6)-dimethyl-L-lysyl(4)-[histone H3] + 2 A + 2 H2O = L-lysyl(4)-[histone H3] + 2 formaldehyde + 2 AH2. It carries out the reaction N(6)-methyl-L-lysyl(4)-[histone H3] + A + H2O = L-lysyl(4)-[histone H3] + formaldehyde + AH2. Its activity is regulated as follows. Histone H3K4me1 and H3K4me2 demethylase activity is inhibited by DNA, this inhibition is released in complex with GLYR1. In terms of biological role, histone demethylase that demethylates 'Lys-4' of histone H3, a specific tag for epigenetic transcriptional activation, thereby acting as a corepressor. Required for de novo DNA methylation of a subset of imprinted genes during oogenesis. Acts by oxidizing the substrate by FAD to generate the corresponding imine that is subsequently hydrolyzed. Demethylates both mono- and di-methylated 'Lys-4' of histone H3. Has no effect on tri-methylated 'Lys-4', mono-, di- or tri-methylated 'Lys-9', mono-, di- or tri-methylated 'Lys-27', mono-, di- or tri-methylated 'Lys-36' of histone H3, or on mono-, di- or tri-methylated 'Lys-20' of histone H4. Alone, it is unable to demethylate H3K4me on nucleosomes and requires the presence of GLYR1 to achieve such activity, they form a multifunctional enzyme complex that modifies transcribed chromatin and facilitates Pol II transcription through nucleosomes. This Homo sapiens (Human) protein is Lysine-specific histone demethylase 2.